A 220-amino-acid chain; its full sequence is Pyrrolidone-carboxylate peptidase 1 (220 aa).

Catalysis depends on residues Glu-80, Cys-143, and His-172.

This sequence belongs to the peptidase C15 family. Homotetramer.

It is found in the cytoplasm. The catalysed reaction is Release of an N-terminal pyroglutamyl group from a polypeptide, the second amino acid generally not being Pro.. Removes 5-oxoproline from various penultimate amino acid residues except L-proline. This is Pyrrolidone-carboxylate peptidase 1 from Photorhabdus laumondii subsp. laumondii (strain DSM 15139 / CIP 105565 / TT01) (Photorhabdus luminescens subsp. laumondii).